The following is a 422-amino-acid chain: Phagosome assembly factor 1 (422 aa).

It belongs to the PHAF1 family. In terms of assembly, interacts with BCAS3; the interaction is requrired for the association with the phagophore.

The protein resides in the cytoplasm. It is found in the preautophagosomal structure. Plays a regulatory role in autophagic activity. In complex with BCAS3, associates with the autophagosome formation site during both non-selective and selective autophagy. The chain is Phagosome assembly factor 1 from Mus musculus (Mouse).